We begin with the raw amino-acid sequence, 144 residues long: MWLQNLLLLGTVVCSFSAPTRPASPVTRPWQHVDAIKEALSLLNHSSDTAAVMNETVEVVSEMFDSQEPTCLQTRLKLYKQGLRGSLTSLSGSLTMMARHYEQHCPPTQETSCETQTITFKSFKENLKDFLFIIPFDCWEPAQK.

An N-terminal signal peptide occupies residues 1–17; sequence MWLQNLLLLGTVVCSFS. Ser24 carries an O-linked (GalNAc...) serine glycan. O-linked (GalNAc...) threonine glycosylation is present at Thr27. Asn44 and Asn54 each carry an N-linked (GlcNAc...) asparagine glycan. 2 disulfide bridges follow: Cys71–Cys113 and Cys105–Cys138.

The protein belongs to the GM-CSF family. As to quaternary structure, monomer. The signaling GM-CSF receptor complex is a dodecamer of two head-to-head hexamers of two alpha, two beta, and two ligand subunits.

The protein resides in the secreted. Cytokine that stimulates the growth and differentiation of hematopoietic precursor cells from various lineages, including granulocytes, macrophages, eosinophils and erythrocytes. In Cervus elaphus (Red deer), this protein is Granulocyte-macrophage colony-stimulating factor (CSF2).